The sequence spans 136 residues: DNA-directed RNA polymerase subunit omega (136 aa).

Belongs to the RNA polymerase subunit omega family. In terms of assembly, the RNAP catalytic core consists of 2 alpha, 1 beta, 1 beta' and 1 omega subunit. When a sigma factor is associated with the core the holoenzyme is formed, which can initiate transcription.

It catalyses the reaction RNA(n) + a ribonucleoside 5'-triphosphate = RNA(n+1) + diphosphate. In terms of biological role, promotes RNA polymerase assembly. Latches the N- and C-terminal regions of the beta' subunit thereby facilitating its interaction with the beta and alpha subunits. This is DNA-directed RNA polymerase subunit omega from Acidiphilium cryptum (strain JF-5).